The following is a 101-amino-acid chain: Large ribosomal subunit protein uL23 (101 aa).

Belongs to the universal ribosomal protein uL23 family. As to quaternary structure, part of the 50S ribosomal subunit. Contacts protein L29, and trigger factor when it is bound to the ribosome.

Its function is as follows. One of the early assembly proteins it binds 23S rRNA. One of the proteins that surrounds the polypeptide exit tunnel on the outside of the ribosome. Forms the main docking site for trigger factor binding to the ribosome. The chain is Large ribosomal subunit protein uL23 from Paenarthrobacter aurescens (strain TC1).